The primary structure comprises 439 residues: Sex-determination protein fem-3 (439 aa).

The disordered stretch occupies residues 21–45 (RRLKRKANDDDDDDETVRERVDDAE).

In terms of assembly, component of a complex containing fem-1, fem-2 and fem-3. Interacts with fem-1 and fem-2 (via N-terminus). Part of a E3 ubiquitin-protein ligase complex, at least composed of cul-2, elc-1, tra-1, fem-1, fem-2 and fem-3; mediates the ubiquitination and subsequent proteasomal degradation of tra-1. Interacts with tra-1. Interacts with sel-10. Interacts with tra-2.

Functionally, required for male development. In XO (male) animals, fem-3 directs male differentiation in all tissues. In XX (hermaphrodite) animals, it specifies the first 80 or so germ cells to be sperm. Negatively regulates male development when bound to tra-2. Together with fem-2 associates with the CBC(fem-1) E3 ubiquitin-protein ligase complex which mediates the ubiquitination and subsequent proteasomal degradation of tra-1. The polypeptide is Sex-determination protein fem-3 (Caenorhabditis remanei (Caenorhabditis vulgaris)).